The chain runs to 129 residues: Procyclic form-specific polypeptide A-beta (129 aa).

A signal peptide spans 1–27 (MAPRSLYLLAVLLFSANLFAGVGFAAA). A disordered region spans residues 27 to 111 (AAEGPEDKGL…PEPEPGAATL (85 aa)). A compositionally biased stretch (acidic residues) spans 53–104 (DDTNGTDPDPEPEPEPEPEPEPEPEPEPEPEPEPEPEPEPEPEPEPEPEPEP). Residue asparagine 56 is glycosylated (N-linked (GlcNAc...) asparagine). Repeat copies occupy residues 59–60 (DP), 61–62 (DP), 63–64 (EP), 65–66 (EP), 67–68 (EP), 69–70 (EP), 71–72 (EP), 73–74 (EP), 75–76 (EP), 77–78 (EP), 79–80 (EP), 81–82 (EP), 83–84 (EP), 85–86 (EP), 87–88 (EP), 89–90 (EP), 91–92 (EP), 93–94 (EP), 95–96 (EP), 97–98 (EP), 99–100 (EP), 101–102 (EP), 103–104 (EP), and 105–106 (EP). The 24 X 2 AA tandem repeats of [DE]-P stretch occupies residues 59 to 106 (DPDPEPEPEPEPEPEPEPEPEPEPEPEPEPEPEPEPEPEPEPEPEPEP). Glycine 107 carries GPI-anchor amidated glycine lipidation. The propeptide occupies 108–129 (AATLKSVALPFAIAAVGLVAAF).

The protein localises to the cell membrane. Functionally, major surface antigen of procyclic forms. In Trypanosoma brucei brucei, this protein is Procyclic form-specific polypeptide A-beta (PARPA-BETA).